The sequence spans 746 residues: Disintegrin and metalloproteinase domain-containing protein 18 (746 aa).

An N-terminal signal peptide occupies residues Met1–Ala16. Residues His17–Pro183 constitute a propeptide that is removed on maturation. N-linked (GlcNAc...) asparagine glycosylation is found at Asn36, Asn122, Asn149, Asn156, Asn177, and Asn294. The Extracellular segment spans residues Asn177 to Asn687. Positions Gln184–Ser381 constitute a Peptidase M12B domain. 4 cysteine pairs are disulfide-bonded: Cys293/Cys376, Cys335/Cys360, Cys337/Cys342, and Cys450/Cys471. N-linked (GlcNAc...) asparagine glycosylation is found at Asn359, Asn465, Asn611, and Asn625. The Disintegrin domain maps to Gln390–Asn479. The region spanning Thr620–Lys654 is the EGF-like domain. 3 disulfides stabilise this stretch: Cys624/Cys636, Cys630/Cys642, and Cys644/Cys653. The chain crosses the membrane as a helical span at residues Trp688–Phe708. The Cytoplasmic segment spans residues Lys709–Lys746.

Post-translationally, the prodomain and the metalloprotease-like domain are cleaved during the epididymal maturation of the spermatozoa. In terms of tissue distribution, expressed predominantly in adult and prepubertal testis.

It localises to the membrane. Functionally, sperm surface membrane protein that may be involved in spermatogenesis and fertilization. This is a non catalytic metalloprotease-like protein. The polypeptide is Disintegrin and metalloproteinase domain-containing protein 18 (ADAM18) (Macaca fascicularis (Crab-eating macaque)).